The primary structure comprises 309 residues: Protease HtpX homolog (309 aa).

The next 2 membrane-spanning stretches (helical) occupy residues Phe7 to Pro27 and Thr28 to Ala48. Residue His134 participates in Zn(2+) binding. Glu135 is an active-site residue. Residue His138 participates in Zn(2+) binding. 2 helical membrane-spanning segments follow: residues Val149–Gly169 and Pro177–Val197. Glu206 contributes to the Zn(2+) binding site. Residues Thr289–Gly309 are disordered.

Belongs to the peptidase M48B family. It depends on Zn(2+) as a cofactor.

The protein localises to the cell inner membrane. The protein is Protease HtpX homolog of Caulobacter sp. (strain K31).